Here is a 541-residue protein sequence, read N- to C-terminus: Effector protein hopAB1 (541 aa).

Disordered regions lie at residues 1–94 (MPGI…EAQQ), 168–222 (QRAL…RHPQ), and 317–338 (RQTT…SGRR). The segment covering 18-31 (TDGEPVTEREHDSS) has biased composition (basic and acidic residues). Residues 183–196 (SSSGSSQRSLIGRS) show a composition bias toward low complexity.

Belongs to the HopAB family.

Its subcellular location is the secreted. Its function is as follows. Effector protein that plays different roles depending on the species and plant cultivars that interact with the pathogen. Acts as a virulence determinant by enhancing the development of disease symptoms and bacterial growth. Acts as an avirulence factor by eliciting hypersensitive response (HR) and plant resistance. The sequence is that of Effector protein hopAB1 (hopAB1) from Pseudomonas savastanoi (Pseudomonas syringae pv. savastanoi).